The sequence spans 188 residues: Elongation factor P (188 aa).

The protein belongs to the elongation factor P family.

It is found in the cytoplasm. It functions in the pathway protein biosynthesis; polypeptide chain elongation. In terms of biological role, involved in peptide bond synthesis. Stimulates efficient translation and peptide-bond synthesis on native or reconstituted 70S ribosomes in vitro. Probably functions indirectly by altering the affinity of the ribosome for aminoacyl-tRNA, thus increasing their reactivity as acceptors for peptidyl transferase. The chain is Elongation factor P from Chloroherpeton thalassium (strain ATCC 35110 / GB-78).